The primary structure comprises 556 residues: Formate--tetrahydrofolate ligase (556 aa).

Residue 65-72 coordinates ATP; sequence TPAGEGKT.

The protein belongs to the formate--tetrahydrofolate ligase family.

It carries out the reaction (6S)-5,6,7,8-tetrahydrofolate + formate + ATP = (6R)-10-formyltetrahydrofolate + ADP + phosphate. Its pathway is one-carbon metabolism; tetrahydrofolate interconversion. The protein is Formate--tetrahydrofolate ligase of Lachnoclostridium phytofermentans (strain ATCC 700394 / DSM 18823 / ISDg) (Clostridium phytofermentans).